The following is a 230-amino-acid chain: Orotidine 5'-phosphate decarboxylase (230 aa).

Substrate-binding positions include D10, K31, D58–T67, T117, R179, Q188, G208, and R209. Catalysis depends on K60, which acts as the Proton donor.

It belongs to the OMP decarboxylase family. Type 1 subfamily. As to quaternary structure, homodimer.

The catalysed reaction is orotidine 5'-phosphate + H(+) = UMP + CO2. It participates in pyrimidine metabolism; UMP biosynthesis via de novo pathway; UMP from orotate: step 2/2. Functionally, catalyzes the decarboxylation of orotidine 5'-monophosphate (OMP) to uridine 5'-monophosphate (UMP). The protein is Orotidine 5'-phosphate decarboxylase of Staphylococcus haemolyticus (strain JCSC1435).